A 511-amino-acid polypeptide reads, in one-letter code: Putative thymidine phosphorylase (511 aa).

It belongs to the thymidine/pyrimidine-nucleoside phosphorylase family. Type 2 subfamily.

It catalyses the reaction thymidine + phosphate = 2-deoxy-alpha-D-ribose 1-phosphate + thymine. In Bradyrhizobium sp. (strain BTAi1 / ATCC BAA-1182), this protein is Putative thymidine phosphorylase.